The sequence spans 86 residues: Mu-theraphotoxin-Cg2a 1 (86 aa).

Residues methionine 1 to alanine 21 form the signal peptide. Positions alanine 22 to arginine 50 are excised as a propeptide. Disulfide bonds link cysteine 52/cysteine 66, cysteine 59/cysteine 71, and cysteine 65/cysteine 78. Phenylalanine 84 is modified (phenylalanine amide).

This sequence belongs to the neurotoxin 10 (Hwtx-1) family. 37 (Jztx-31) subfamily. As to expression, expressed by the venom gland.

The protein resides in the secreted. Its function is as follows. Inhibits both peak current and fast inactivation of voltage-gated sodium channels (Nav) channels. Inhibits the inactivation of Nav on DRG neurons (EC(50)=1.77 uM) and peak current of cardiac myocytes (IC(50)=0.90 uM). The polypeptide is Mu-theraphotoxin-Cg2a 1 (Chilobrachys guangxiensis (Chinese earth tiger tarantula)).